The following is a 208-amino-acid chain: Large ribosomal subunit protein uL3 (208 aa).

Residues Asn126–Pro150 are disordered.

The protein belongs to the universal ribosomal protein uL3 family. As to quaternary structure, part of the 50S ribosomal subunit. Forms a cluster with proteins L14 and L19.

In terms of biological role, one of the primary rRNA binding proteins, it binds directly near the 3'-end of the 23S rRNA, where it nucleates assembly of the 50S subunit. This chain is Large ribosomal subunit protein uL3, found in Exiguobacterium sibiricum (strain DSM 17290 / CCUG 55495 / CIP 109462 / JCM 13490 / 255-15).